A 154-amino-acid chain; its full sequence is Ribosome maturation factor RimP (154 aa).

This sequence belongs to the RimP family.

The protein localises to the cytoplasm. In terms of biological role, required for maturation of 30S ribosomal subunits. In Salmonella gallinarum (strain 287/91 / NCTC 13346), this protein is Ribosome maturation factor RimP.